A 697-amino-acid chain; its full sequence is Probable glutamine--tRNA ligase (697 aa).

Residues 204-214 (PEPNGILHIGH) carry the 'HIGH' region motif. ATP is bound by residues 205–207 (EPN) and 211–217 (HIGHAKA). 2 residues coordinate L-glutamine: D237 and Y386. ATP is bound by residues T405, 434–435 (RL), and 442–444 (LSK). Residues 441–445 (VLSKR) carry the 'KMSKS' region motif.

The protein belongs to the class-I aminoacyl-tRNA synthetase family.

It catalyses the reaction tRNA(Gln) + L-glutamine + ATP = L-glutaminyl-tRNA(Gln) + AMP + diphosphate. The sequence is that of Probable glutamine--tRNA ligase from Encephalitozoon cuniculi (strain GB-M1) (Microsporidian parasite).